The following is a 270-amino-acid chain: Glucosamine-6-phosphate deaminase (270 aa).

Asp72 acts as the Proton acceptor; for enolization step in catalysis. Asp141 acts as the For ring-opening step in catalysis. The Proton acceptor; for ring-opening step role is filled by His143. Glu148 functions as the For ring-opening step in the catalytic mechanism.

It belongs to the glucosamine/galactosamine-6-phosphate isomerase family. NagB subfamily. In terms of assembly, homohexamer.

It carries out the reaction alpha-D-glucosamine 6-phosphate + H2O = beta-D-fructose 6-phosphate + NH4(+). The protein operates within amino-sugar metabolism; N-acetylneuraminate degradation; D-fructose 6-phosphate from N-acetylneuraminate: step 5/5. Its activity is regulated as follows. Allosterically activated by N-acetylglucosamine 6-phosphate (GlcNAc6P). Functionally, catalyzes the reversible isomerization-deamination of glucosamine 6-phosphate (GlcN6P) to form fructose 6-phosphate (Fru6P) and ammonium ion. The polypeptide is Glucosamine-6-phosphate deaminase (Haemophilus influenzae (strain PittEE)).